A 480-amino-acid polypeptide reads, in one-letter code: Dimethyl-sulfide monooxygenase (480 aa).

5 residues coordinate FMN: aspartate 58, threonine 104, histidine 154, tyrosine 158, and serine 230. The segment at 423–480 (QDSYKPGSLRRKLIGTNDGRVESTHPAAQYRDAYVGKESVADRTQPSPFANAKAPVAE) is disordered.

It belongs to the NtaA/SnaA/DszA monooxygenase family. As to quaternary structure, heterodimer of 2 subunits, DmoA and DmoB. Requires FMN as cofactor.

The enzyme catalyses dimethyl sulfide + NADH + O2 + H(+) = methanethiol + formaldehyde + NAD(+) + H2O. With respect to regulation, inhibited by umbelliferone, 8-anilinonaphthalenesulfonate, a range of metal-chelating agents, and Hg(2+), Cd(2+) and Pb(2+) ions. Its function is as follows. Monooxygenase that mediates oxidation of dimethyl sulfide, the first step in dimethyl sulfide degradation pathway. Has much lower activity with diethyl sulfide and other short-chain alkyl methyl sulfides. The protein is Dimethyl-sulfide monooxygenase (dmoA) of Hyphomicrobium sulfonivorans.